Here is a 408-residue protein sequence, read N- to C-terminus: Peptidase T (408 aa).

H78 serves as a coordination point for Zn(2+). D80 is an active-site residue. D140 contacts Zn(2+). The Proton acceptor role is filled by E173. Zn(2+) is bound by residues E174, D196, and H379.

This sequence belongs to the peptidase M20B family. Zn(2+) is required as a cofactor.

It is found in the cytoplasm. The catalysed reaction is Release of the N-terminal residue from a tripeptide.. Its function is as follows. Cleaves the N-terminal amino acid of tripeptides. In Escherichia fergusonii (strain ATCC 35469 / DSM 13698 / CCUG 18766 / IAM 14443 / JCM 21226 / LMG 7866 / NBRC 102419 / NCTC 12128 / CDC 0568-73), this protein is Peptidase T.